Reading from the N-terminus, the 333-residue chain is Anthranilate phosphoribosyltransferase (333 aa).

Residues Gly81, 84–85, Thr89, 91–94, 109–117, and Ala121 contribute to the 5-phospho-alpha-D-ribose 1-diphosphate site; these read GD, NIST, and KHGNRSVSS. Gly81 contributes to the anthranilate binding site. Ser93 contacts Mg(2+). Asn112 lines the anthranilate pocket. Arg167 provides a ligand contact to anthranilate. Positions 225 and 226 each coordinate Mg(2+).

This sequence belongs to the anthranilate phosphoribosyltransferase family. In terms of assembly, homodimer. Requires Mg(2+) as cofactor.

It carries out the reaction N-(5-phospho-beta-D-ribosyl)anthranilate + diphosphate = 5-phospho-alpha-D-ribose 1-diphosphate + anthranilate. The protein operates within amino-acid biosynthesis; L-tryptophan biosynthesis; L-tryptophan from chorismate: step 2/5. Its function is as follows. Catalyzes the transfer of the phosphoribosyl group of 5-phosphorylribose-1-pyrophosphate (PRPP) to anthranilate to yield N-(5'-phosphoribosyl)-anthranilate (PRA). This is Anthranilate phosphoribosyltransferase from Pasteurella multocida (strain Pm70).